A 222-amino-acid polypeptide reads, in one-letter code: Large ribosomal subunit protein bL25 (222 aa).

It belongs to the bacterial ribosomal protein bL25 family. CTC subfamily. As to quaternary structure, part of the 50S ribosomal subunit; part of the 5S rRNA/L5/L18/L25 subcomplex. Contacts the 5S rRNA. Binds to the 5S rRNA independently of L5 and L18.

In terms of biological role, this is one of the proteins that binds to the 5S RNA in the ribosome where it forms part of the central protuberance. The sequence is that of Large ribosomal subunit protein bL25 from Ruthia magnifica subsp. Calyptogena magnifica.